The sequence spans 129 residues: MSVWQGRSRRKPTGGLYRPARKKRKYEMGREPIETHVAEEAFKIKKVRTRGGNLKVKVVRTGFANVLDPETGTCKKVKIITVRENKANIHYVRRNVITKGAIIETEIGLAKVTSRPGQDGTVNAILIKE.

The interval methionine 1–glycine 29 is disordered.

This sequence belongs to the eukaryotic ribosomal protein eS8 family. As to quaternary structure, part of the 30S ribosomal subunit.

The sequence is that of Small ribosomal subunit protein eS8 (rps8e) from Methanocaldococcus jannaschii (strain ATCC 43067 / DSM 2661 / JAL-1 / JCM 10045 / NBRC 100440) (Methanococcus jannaschii).